A 126-amino-acid polypeptide reads, in one-letter code: Histone H2B type 1-K (126 aa).

The span at 1–12 (MPEPAKSAPAPK) shows a compositional bias: low complexity. A disordered region spans residues 1 to 36 (MPEPAKSAPAPKKGSKKAVTKAQKKDGKKRKRSRKE). P2 carries the N-acetylproline modification. E3 bears the ADP-ribosyl glutamic acid mark. Residue K6 is modified to N6-(2-hydroxyisobutyryl)lysine; alternate. N6-(beta-hydroxybutyryl)lysine; alternate is present on K6. K6 carries the N6-acetyllysine; alternate modification. An N6-butyryllysine; alternate modification is found at K6. K6 carries the post-translational modification N6-crotonyllysine; alternate. N6-lactoyllysine; alternate is present on K6. K6 is covalently cross-linked (Glycyl lysine isopeptide (Lys-Gly) (interchain with G-Cter in SUMO2); alternate). S7 is subject to ADP-ribosylserine. K12 carries the post-translational modification N6-(beta-hydroxybutyryl)lysine; alternate. An N6-acetyllysine; alternate mark is found at K12 and K13. N6-crotonyllysine; alternate is present on residues K12 and K13. Residue K12 is modified to N6-lactoyllysine; alternate. An N6-(2-hydroxyisobutyryl)lysine; alternate modification is found at K13. S15 bears the Phosphoserine; by STK4/MST1 mark. An N6-acetyllysine; alternate mark is found at K16, K17, K21, and K24. An N6-crotonyllysine; alternate mark is found at K16, K17, K21, and K24. An N6-lactoyllysine; alternate mark is found at K16, K17, K21, and K24. Residue K17 is modified to N6-glutaryllysine; alternate. Residues K21 and K24 each carry the N6-(2-hydroxyisobutyryl)lysine; alternate modification. K21 carries the post-translational modification N6-(beta-hydroxybutyryl)lysine; alternate. N6-butyryllysine; alternate is present on K21. K21 participates in a covalent cross-link: Glycyl lysine isopeptide (Lys-Gly) (interchain with G-Cter in SUMO2); alternate. At K25 the chain carries N6-(2-hydroxyisobutyryl)lysine. Residue K35 is modified to N6-(2-hydroxyisobutyryl)lysine; alternate. K35 carries the post-translational modification N6-(beta-hydroxybutyryl)lysine; alternate. Position 35 is an N6-crotonyllysine; alternate (K35). K35 is modified (N6-glutaryllysine; alternate). An N6-succinyllysine; alternate modification is found at K35. A Glycyl lysine isopeptide (Lys-Gly) (interchain with G-Cter in ubiquitin); alternate cross-link involves residue K35. E36 bears the PolyADP-ribosyl glutamic acid mark. Residue S37 is modified to Phosphoserine; by AMPK. N6-(2-hydroxyisobutyryl)lysine; alternate is present on residues K44, K47, and K58. N6-lactoyllysine; alternate is present on K44. N6-glutaryllysine; alternate occurs at positions 44 and 47. N6-methyllysine; alternate is present on K47. Residue K58 is modified to N6,N6-dimethyllysine; alternate. Dimethylated arginine is present on R80. K86 carries the N6-(2-hydroxyisobutyryl)lysine; alternate modification. Position 86 is an N6-acetyllysine; alternate (K86). The residue at position 86 (K86) is an N6-lactoyllysine; alternate. N6,N6,N6-trimethyllysine; alternate is present on K86. Omega-N-methylarginine is present on residues R87 and R93. K109 carries the N6-(2-hydroxyisobutyryl)lysine; alternate modification. N6-lactoyllysine; alternate is present on K109. Residue K109 is modified to N6-glutaryllysine; alternate. An N6-methyllysine; alternate modification is found at K109. S113 carries O-linked (GlcNAc) serine glycosylation. T116 carries the phosphothreonine modification. 2 positions are modified to N6-(2-hydroxyisobutyryl)lysine; alternate: K117 and K121. An N6-(beta-hydroxybutyryl)lysine; alternate modification is found at K117. K117 and K121 each carry N6-lactoyllysine; alternate. An N6-glutaryllysine; alternate mark is found at K117 and K121. 2 positions are modified to N6-succinyllysine; alternate: K117 and K121. The residue at position 117 (K117) is an N6-methylated lysine; alternate. A Glycyl lysine isopeptide (Lys-Gly) (interchain with G-Cter in ubiquitin); alternate cross-link involves residue K121.

This sequence belongs to the histone H2B family. The nucleosome is a histone octamer containing two molecules each of H2A, H2B, H3 and H4 assembled in one H3-H4 heterotetramer and two H2A-H2B heterodimers. The octamer wraps approximately 147 bp of DNA. Post-translationally, monoubiquitination at Lys-35 (H2BK34Ub) by the MSL1/MSL2 dimer is required for histone H3 'Lys-4' (H3K4me) and 'Lys-79' (H3K79me) methylation and transcription activation at specific gene loci, such as HOXA9 and MEIS1 loci. Similarly, monoubiquitination at Lys-121 (H2BK120Ub) by the RNF20/40 complex gives a specific tag for epigenetic transcriptional activation and is also prerequisite for histone H3 'Lys-4' and 'Lys-79' methylation. It also functions cooperatively with the FACT dimer to stimulate elongation by RNA polymerase II. H2BK120Ub also acts as a regulator of mRNA splicing: deubiquitination by USP49 is required for efficient cotranscriptional splicing of a large set of exons. In terms of processing, phosphorylated on Ser-15 (H2BS14ph) by STK4/MST1 during apoptosis; which facilitates apoptotic chromatin condensation. Also phosphorylated on Ser-15 in response to DNA double strand breaks (DSBs), and in correlation with somatic hypermutation and immunoglobulin class-switch recombination. Phosphorylation at Ser-37 (H2BS36ph) by AMPK in response to stress promotes transcription. GlcNAcylation at Ser-113 promotes monoubiquitination of Lys-121. It fluctuates in response to extracellular glucose, and associates with transcribed genes. Post-translationally, ADP-ribosylated by PARP1 or PARP2 on Ser-7 (H2BS6ADPr) in response to DNA damage. H2BS6ADPr promotes recruitment of CHD1L. Mono-ADP-ribosylated on Glu-3 (H2BE2ADPr) by PARP3 in response to single-strand breaks. Poly ADP-ribosylation on Glu-36 (H2BE35ADPr) by PARP1 regulates adipogenesis: it inhibits phosphorylation at Ser-37 (H2BS36ph), thereby blocking expression of pro-adipogenetic genes. In terms of processing, crotonylation (Kcr) is specifically present in male germ cells and marks testis-specific genes in post-meiotic cells, including X-linked genes that escape sex chromosome inactivation in haploid cells. Crotonylation marks active promoters and enhancers and confers resistance to transcriptional repressors. It is also associated with post-meiotically activated genes on autosomes. Lactylated in macrophages by EP300/P300 by using lactoyl-CoA directly derived from endogenous or exogenous lactate, leading to stimulates gene transcription.

The protein resides in the nucleus. It localises to the chromosome. Core component of nucleosome. Nucleosomes wrap and compact DNA into chromatin, limiting DNA accessibility to the cellular machineries which require DNA as a template. Histones thereby play a central role in transcription regulation, DNA repair, DNA replication and chromosomal stability. DNA accessibility is regulated via a complex set of post-translational modifications of histones, also called histone code, and nucleosome remodeling. The sequence is that of Histone H2B type 1-K from Macaca fascicularis (Crab-eating macaque).